Here is a 387-residue protein sequence, read N- to C-terminus: Fructose-1,6-bisphosphate aldolase/phosphatase (387 aa).

Asp-13 serves as the catalytic Proton acceptor; for FBP phosphatase activity. Positions 13, 20, 54, and 55 each coordinate Mg(2+). His-20 lines the beta-D-fructose 1,6-bisphosphate pocket. His-20 is a dihydroxyacetone phosphate binding site. Tyr-92 contributes to the beta-D-fructose 1,6-bisphosphate binding site. Residue Gln-96 coordinates Mg(2+). Residue 105 to 106 participates in beta-D-fructose 1,6-bisphosphate binding; that stretch reads GN. Asp-133 serves as a coordination point for Mg(2+). Residue Lys-134 participates in beta-D-fructose 1,6-bisphosphate binding. Dihydroxyacetone phosphate is bound at residue Lys-134. Tyr-229 serves as the catalytic Proton donor/acceptor; for FBP aldolase activity. Lys-232, Asp-233, and Asp-234 together coordinate Mg(2+). Lys-232 functions as the Schiff-base intermediate with DHAP; for FBP aldolase activity in the catalytic mechanism. Residues 242 to 243, Arg-266, Asp-287, and Tyr-348 each bind beta-D-fructose 1,6-bisphosphate; that span reads QS. 2 residues coordinate dihydroxyacetone phosphate: Arg-266 and Asp-287.

This sequence belongs to the FBP aldolase/phosphatase family. In terms of assembly, homooctamer; dimer of tetramers. The cofactor is Mg(2+).

The catalysed reaction is beta-D-fructose 1,6-bisphosphate + H2O = beta-D-fructose 6-phosphate + phosphate. It carries out the reaction beta-D-fructose 1,6-bisphosphate = D-glyceraldehyde 3-phosphate + dihydroxyacetone phosphate. It functions in the pathway carbohydrate biosynthesis; gluconeogenesis. Its function is as follows. Catalyzes two subsequent steps in gluconeogenesis: the aldol condensation of dihydroxyacetone phosphate (DHAP) and glyceraldehyde-3-phosphate (GA3P) to fructose-1,6-bisphosphate (FBP), and the dephosphorylation of FBP to fructose-6-phosphate (F6P). In Ignicoccus hospitalis (strain KIN4/I / DSM 18386 / JCM 14125), this protein is Fructose-1,6-bisphosphate aldolase/phosphatase.